Consider the following 319-residue polypeptide: Acetyl-coenzyme A carboxylase carboxyl transferase subunit alpha (319 aa).

Positions N35–D296 constitute a CoA carboxyltransferase C-terminal domain.

Belongs to the AccA family. In terms of assembly, acetyl-CoA carboxylase is a heterohexamer composed of biotin carboxyl carrier protein (AccB), biotin carboxylase (AccC) and two subunits each of ACCase subunit alpha (AccA) and ACCase subunit beta (AccD).

The protein localises to the cytoplasm. The enzyme catalyses N(6)-carboxybiotinyl-L-lysyl-[protein] + acetyl-CoA = N(6)-biotinyl-L-lysyl-[protein] + malonyl-CoA. The protein operates within lipid metabolism; malonyl-CoA biosynthesis; malonyl-CoA from acetyl-CoA: step 1/1. Its function is as follows. Component of the acetyl coenzyme A carboxylase (ACC) complex. First, biotin carboxylase catalyzes the carboxylation of biotin on its carrier protein (BCCP) and then the CO(2) group is transferred by the carboxyltransferase to acetyl-CoA to form malonyl-CoA. This Yersinia enterocolitica serotype O:8 / biotype 1B (strain NCTC 13174 / 8081) protein is Acetyl-coenzyme A carboxylase carboxyl transferase subunit alpha.